We begin with the raw amino-acid sequence, 475 residues long: Aspartyl/glutamyl-tRNA(Asn/Gln) amidotransferase subunit B (475 aa).

It belongs to the GatB/GatE family. GatB subfamily. In terms of assembly, heterotrimer of A, B and C subunits.

It carries out the reaction L-glutamyl-tRNA(Gln) + L-glutamine + ATP + H2O = L-glutaminyl-tRNA(Gln) + L-glutamate + ADP + phosphate + H(+). It catalyses the reaction L-aspartyl-tRNA(Asn) + L-glutamine + ATP + H2O = L-asparaginyl-tRNA(Asn) + L-glutamate + ADP + phosphate + 2 H(+). In terms of biological role, allows the formation of correctly charged Asn-tRNA(Asn) or Gln-tRNA(Gln) through the transamidation of misacylated Asp-tRNA(Asn) or Glu-tRNA(Gln) in organisms which lack either or both of asparaginyl-tRNA or glutaminyl-tRNA synthetases. The reaction takes place in the presence of glutamine and ATP through an activated phospho-Asp-tRNA(Asn) or phospho-Glu-tRNA(Gln). The polypeptide is Aspartyl/glutamyl-tRNA(Asn/Gln) amidotransferase subunit B (Chlorobium limicola (strain DSM 245 / NBRC 103803 / 6330)).